Here is a 212-residue protein sequence, read N- to C-terminus: Peptide methionine sulfoxide reductase MsrA (212 aa).

Cysteine 52 is an active-site residue.

The protein belongs to the MsrA Met sulfoxide reductase family.

The catalysed reaction is L-methionyl-[protein] + [thioredoxin]-disulfide + H2O = L-methionyl-(S)-S-oxide-[protein] + [thioredoxin]-dithiol. It carries out the reaction [thioredoxin]-disulfide + L-methionine + H2O = L-methionine (S)-S-oxide + [thioredoxin]-dithiol. Functionally, has an important function as a repair enzyme for proteins that have been inactivated by oxidation. Catalyzes the reversible oxidation-reduction of methionine sulfoxide in proteins to methionine. The chain is Peptide methionine sulfoxide reductase MsrA from Salmonella arizonae (strain ATCC BAA-731 / CDC346-86 / RSK2980).